Reading from the N-terminus, the 321-residue chain is uncharacterized protein (321 aa).

Residues 130-314 (NLVYDLETTG…NDVDALIKIM (185 aa)) form the Exonuclease domain.

This is an uncharacterized protein from Acanthamoeba polyphaga (Amoeba).